The following is a 283-amino-acid chain: 3-methyl-2-oxobutanoate hydroxymethyltransferase (283 aa).

Mg(2+) contacts are provided by Asp46 and Asp85. 3-methyl-2-oxobutanoate-binding positions include 46 to 47, Asp85, and Lys115; that span reads DS. Position 117 (Glu117) interacts with Mg(2+). Catalysis depends on Glu184, which acts as the Proton acceptor.

It belongs to the PanB family. Homodecamer; pentamer of dimers. Mg(2+) is required as a cofactor.

The protein resides in the cytoplasm. The catalysed reaction is 3-methyl-2-oxobutanoate + (6R)-5,10-methylene-5,6,7,8-tetrahydrofolate + H2O = 2-dehydropantoate + (6S)-5,6,7,8-tetrahydrofolate. Its pathway is cofactor biosynthesis; (R)-pantothenate biosynthesis; (R)-pantoate from 3-methyl-2-oxobutanoate: step 1/2. Catalyzes the reversible reaction in which hydroxymethyl group from 5,10-methylenetetrahydrofolate is transferred onto alpha-ketoisovalerate to form ketopantoate. This chain is 3-methyl-2-oxobutanoate hydroxymethyltransferase, found in Acetivibrio thermocellus (strain ATCC 27405 / DSM 1237 / JCM 9322 / NBRC 103400 / NCIMB 10682 / NRRL B-4536 / VPI 7372) (Clostridium thermocellum).